The chain runs to 714 residues: Zinc finger matrin-type protein 1 (714 aa).

The segment at 89–119 (NFCKPCGVVLQHESERISHFESEIHAQNVKF) adopts a Matrin-type 1 zinc-finger fold. The tract at residues 172–214 (HYVGKSHSPTQNQSLEEHDQVSPSTCSPKMDEPNTTPAPPPFL) is disordered. The segment at 230 to 254 (YVCHICSITFTSLHMFRSHMQGTEH) adopts a Matrin-type 2 zinc-finger fold. Over residues 417–434 (RERVDSEHRQRPCEERFS) the composition is skewed to basic and acidic residues. 2 disordered regions span residues 417 to 469 (RERV…NDDF) and 571 to 714 (MPAS…ILGF). Polar residues-rich tracts occupy residues 437–446 (APQTYQQEYS) and 575–588 (LSLS…SSYN). The span at 609–619 (SHRRRRQKRKR) shows a compositional bias: basic residues. 2 stretches are compositionally biased toward basic and acidic residues: residues 620–632 (HLEE…EKEQ) and 640–662 (SYQD…EDKA). Positions 669-678 (TKHRRKKRKH) are enriched in basic residues.

The protein resides in the nucleus. This is Zinc finger matrin-type protein 1 (Zmat1) from Mus musculus (Mouse).